Consider the following 784-residue polypeptide: Ribosome biogenesis protein BOP1 homolog (784 aa).

The span at 1–11 (MTKKLALKRRG) shows a compositional bias: basic residues. Positions 1–159 (MTKKLALKRR…DSDTSDEEDI (159 aa)) are disordered. Acidic residues-rich tracts occupy residues 27 to 36 (SENEEEEEDL), 45 to 54 (EDSTDDEGID), 62 to 73 (SEELQFESDEEG), and 84 to 111 (AEEDEESSDEEDNEEEESTDGEEVEDEE). Basic and acidic residues-rich tracts occupy residues 112–123 (KDSKSKQTDDKP) and 138–148 (LPKRDSSKPEY). Residues 149 to 158 (QDSDTSDEED) show a composition bias toward acidic residues. WD repeat units follow at residues 445 to 486 (GHTD…RTIE), 488 to 526 (DEVVRCVAWCPNPKLSIIAVATGNRLLLVNPKVGDKVLV), 570 to 612 (THFK…SQIP), 615 to 653 (KSKGLIQFVLFHPVKPCFFVATQHNIRIYDLVKQELVKK), 656 to 695 (TNSKWISGMSIHPKGDNLLVSTYDKKMLWFDLDLSTKPYQ), 699 to 738 (LHRNAVRSVAFHLRYPLFASGSDDQAVIVSHGMVYNDLLQ), and 754 to 784 (RDEFGVLDVNWHPVQPWVFSTGADSTIRLYT).

This sequence belongs to the WD repeat BOP1/ERB1 family.

The protein localises to the nucleus. It localises to the nucleolus. The protein resides in the nucleoplasm. Required for maturation of ribosomal RNAs and formation of the large ribosomal subunit. This chain is Ribosome biogenesis protein BOP1 homolog, found in Drosophila melanogaster (Fruit fly).